The primary structure comprises 200 residues: Small ribosomal subunit protein uS4 (200 aa).

In terms of domain architecture, S4 RNA-binding spans 92–155; it reads SRLDAVVYSL…QNLDIIKESV (64 aa).

Belongs to the universal ribosomal protein uS4 family. In terms of assembly, part of the 30S ribosomal subunit. Contacts protein S5. The interaction surface between S4 and S5 is involved in control of translational fidelity.

In terms of biological role, one of the primary rRNA binding proteins, it binds directly to 16S rRNA where it nucleates assembly of the body of the 30S subunit. Its function is as follows. With S5 and S12 plays an important role in translational accuracy. In Staphylococcus haemolyticus (strain JCSC1435), this protein is Small ribosomal subunit protein uS4.